The sequence spans 494 residues: Paired box protein Pax-2-B (494 aa).

A DNA-binding region (paired) is located at residues 15–141; the sequence is RHGGVNQLGG…SSINRIIRTK (127 aa). The tract at residues 18–74 is PAI subdomain; that stretch reads GVNQLGGVFVNGRPLPDVVRQRIVELAHQGVRPCDISRQLRVSHGCVSKILGRYYET. The interval 93-141 is RED subdomain; that stretch reads KVVDKIADYKRQNPTMFAWEIRDRLLAEGICDNDTVPSVSSINRIIRTK. The disordered stretch occupies residues 142 to 221; that stretch reads VQQPFHPTPD…GDSQSSVESL (80 aa). The span at 163–175 shows a compositional bias: low complexity; the sequence is VPSTASPPVSSAS.

Expression becomes spatially localized at mid-gastrula stages and is localized to the nervous system (midbrain, hindbrain, spinal cord), sensory organs (optic vesicle and stalk, otic vesicle), visceral arches, developing excretory system (pronephros, pronephric duct, rectal diverticulum, proctodaeum) and thryoid gland. Splicing does not appear to be tissue-specific.

Its subcellular location is the nucleus. Its function is as follows. Probable transcription factor. Involved in kidney development, acting synergistically with lhx1/lim-1 in pronephric morphogenesis during the tailbud stages. The chain is Paired box protein Pax-2-B (pax2-b) from Xenopus laevis (African clawed frog).